Reading from the N-terminus, the 591-residue chain is MAGGQIEKLVKYKSTVKDPGTPGFLRIREGMLLFVPNDPKSDSKLKVLTQNIKSQKYTKEGSNKPPWLNLTNKQAKSHIFEFENYPDMHACRDFITKALAKCELEPNKSVVSTSSEQLSIKELELRFKLLRENSELQRLHKQFVESKVLTEDEFWATRKKLLGKDSIRKSKQQLGLKSMMVSGIKPSTDGRTNRVTFNLTPEIIFQIFAEKPAVRQAFINYVPSKMTEKDFWTKYFRAEYLYSTKNTAVAAAEAAEDEELAVFLKPDEILARETRHKIRRVDPTLDMEADQGDDYTHLMDHGIQRDGTMDVVEPQNDQFKRSLLQDLNRHAAVVLEGRSIDVESEDTRIVAEALTRVKQVSKADGETTKDANQERLERMSRVAGMEDLQAPQNFPLAPLSIKDPRDYFESQQGNVLNVPRGAKGLKRNVHEAYGLLKESILEIRATGLSDPLIKPEVSFEVFSSLTRTIATAKNINGKNPRESFLDRLPKSTKDEVLHHWTSIQELLKHFWSSYPITTTYLHTKVGKLKDAMSNTYSKLEAMKESVQSDLRHQVSLLVRPMQQALDAAFHHYEVDLQRRTAKSGERPNGYV.

2 consecutive BSD domains span residues Ser-112–Ser-166 and Arg-191–Ser-243.

Belongs to the TFB1 family. Component of the 7-subunit TFIIH core complex composed of XPB, XPD, TFB1/GTF2H1, GTF2H2/P44, TFB4/GTF2H3, TFB2/GTF2H4 and TFB5/GTF2H5, which is active in NER. The core complex associates with the 3-subunit CDK-activating kinase (CAK) module composed of CYCH1/cyclin H1, CDKD and MAT1/At4g30820 to form the 10-subunit holoenzyme (holo-TFIIH) active in transcription.

It is found in the nucleus. Functionally, component of the general transcription and DNA repair factor IIH (TFIIH) core complex, which is involved in general and transcription-coupled nucleotide excision repair (NER) of damaged DNA and, when complexed to CAK, in RNA transcription by RNA polymerase II. In NER, TFIIH acts by opening DNA around the lesion to allow the excision of the damaged oligonucleotide and its replacement by a new DNA fragment. In transcription, TFIIH has an essential role in transcription initiation. When the pre-initiation complex (PIC) has been established, TFIIH is required for promoter opening and promoter escape. Phosphorylation of the C-terminal tail (CTD) of the largest subunit of RNA polymerase II by the kinase module CAK controls the initiation of transcription. The polypeptide is General transcription and DNA repair factor IIH subunit TFB1-1 (Arabidopsis thaliana (Mouse-ear cress)).